The primary structure comprises 288 residues: 33 kDa chaperonin (288 aa).

Cystine bridges form between cysteine 236–cysteine 238 and cysteine 269–cysteine 272.

This sequence belongs to the HSP33 family. Post-translationally, under oxidizing conditions two disulfide bonds are formed involving the reactive cysteines. Under reducing conditions zinc is bound to the reactive cysteines and the protein is inactive.

The protein resides in the cytoplasm. Its function is as follows. Redox regulated molecular chaperone. Protects both thermally unfolding and oxidatively damaged proteins from irreversible aggregation. Plays an important role in the bacterial defense system toward oxidative stress. This Lactococcus lactis subsp. cremoris (strain MG1363) protein is 33 kDa chaperonin.